The sequence spans 245 residues: 6-carboxyhexanoate--CoA ligase (245 aa).

It belongs to the BioW family. Homodimer. Mg(2+) is required as a cofactor.

The enzyme catalyses heptanedioate + ATP + CoA = 6-carboxyhexanoyl-CoA + AMP + diphosphate. The protein operates within metabolic intermediate metabolism; pimeloyl-CoA biosynthesis; pimeloyl-CoA from pimelate: step 1/1. Its function is as follows. Catalyzes the transformation of pimelate into pimeloyl-CoA with concomitant hydrolysis of ATP to AMP. In Thermodesulfovibrio yellowstonii (strain ATCC 51303 / DSM 11347 / YP87), this protein is 6-carboxyhexanoate--CoA ligase.